We begin with the raw amino-acid sequence, 122 residues long: Large ribosomal subunit protein bL12 (122 aa).

Belongs to the bacterial ribosomal protein bL12 family. In terms of assembly, homodimer. Part of the ribosomal stalk of the 50S ribosomal subunit. Forms a multimeric L10(L12)X complex, where L10 forms an elongated spine to which 2 to 4 L12 dimers bind in a sequential fashion. Binds GTP-bound translation factors.

Forms part of the ribosomal stalk which helps the ribosome interact with GTP-bound translation factors. Is thus essential for accurate translation. This is Large ribosomal subunit protein bL12 from Yersinia enterocolitica serotype O:8 / biotype 1B (strain NCTC 13174 / 8081).